A 226-amino-acid polypeptide reads, in one-letter code: 7-cyano-7-deazaguanine synthase (226 aa).

Residue 10-20 (FSGGQDSTTLA) participates in ATP binding. 4 residues coordinate Zn(2+): C190, C205, C208, and C211.

Belongs to the QueC family. Zn(2+) serves as cofactor.

The enzyme catalyses 7-carboxy-7-deazaguanine + NH4(+) + ATP = 7-cyano-7-deazaguanine + ADP + phosphate + H2O + H(+). It functions in the pathway purine metabolism; 7-cyano-7-deazaguanine biosynthesis. Catalyzes the ATP-dependent conversion of 7-carboxy-7-deazaguanine (CDG) to 7-cyano-7-deazaguanine (preQ(0)). The polypeptide is 7-cyano-7-deazaguanine synthase (Helicobacter pylori (strain ATCC 700392 / 26695) (Campylobacter pylori)).